An 820-amino-acid chain; its full sequence is Sucrose synthase 2 (820 aa).

Positions 276 to 753 are GT-B glycosyltransferase; that stretch reads MVFNVVILSP…GLKRIYEKYT (478 aa).

It belongs to the glycosyltransferase 1 family. Plant sucrose synthase subfamily.

The enzyme catalyses an NDP-alpha-D-glucose + D-fructose = a ribonucleoside 5'-diphosphate + sucrose + H(+). Its function is as follows. Sucrose-cleaving enzyme that provides UDP-glucose and fructose for various metabolic pathways. The sequence is that of Sucrose synthase 2 from Tulipa gesneriana (Garden tulip).